We begin with the raw amino-acid sequence, 467 residues long: Glycogen synthase (467 aa).

Lysine 16 is an ADP-alpha-D-glucose binding site.

It belongs to the glycosyltransferase 1 family. Bacterial/plant glycogen synthase subfamily.

It carries out the reaction [(1-&gt;4)-alpha-D-glucosyl](n) + ADP-alpha-D-glucose = [(1-&gt;4)-alpha-D-glucosyl](n+1) + ADP + H(+). It functions in the pathway glycan biosynthesis; glycogen biosynthesis. Its function is as follows. Synthesizes alpha-1,4-glucan chains using ADP-glucose. This Paracoccus denitrificans (strain Pd 1222) protein is Glycogen synthase.